Reading from the N-terminus, the 196-residue chain is ATP-dependent Clp protease proteolytic subunit (196 aa).

Ser-101 acts as the Nucleophile in catalysis. His-126 is an active-site residue.

It belongs to the peptidase S14 family. In terms of assembly, component of the chloroplastic Clp protease core complex.

The protein resides in the plastid. It is found in the chloroplast stroma. The catalysed reaction is Hydrolysis of proteins to small peptides in the presence of ATP and magnesium. alpha-casein is the usual test substrate. In the absence of ATP, only oligopeptides shorter than five residues are hydrolyzed (such as succinyl-Leu-Tyr-|-NHMec, and Leu-Tyr-Leu-|-Tyr-Trp, in which cleavage of the -Tyr-|-Leu- and -Tyr-|-Trp bonds also occurs).. Cleaves peptides in various proteins in a process that requires ATP hydrolysis. Has a chymotrypsin-like activity. Plays a major role in the degradation of misfolded proteins. In Aethionema cordifolium (Lebanon stonecress), this protein is ATP-dependent Clp protease proteolytic subunit.